A 443-amino-acid chain; its full sequence is Thymidine phosphorylase (443 aa).

Belongs to the thymidine/pyrimidine-nucleoside phosphorylase family. Homodimer.

It carries out the reaction thymidine + phosphate = 2-deoxy-alpha-D-ribose 1-phosphate + thymine. It participates in pyrimidine metabolism; dTMP biosynthesis via salvage pathway; dTMP from thymine: step 1/2. The enzymes which catalyze the reversible phosphorolysis of pyrimidine nucleosides are involved in the degradation of these compounds and in their utilization as carbon and energy sources, or in the rescue of pyrimidine bases for nucleotide synthesis. The sequence is that of Thymidine phosphorylase from Shewanella sp. (strain ANA-3).